Consider the following 143-residue polypeptide: Nucleoside diphosphate kinase (143 aa).

ATP is bound by residues lysine 11, phenylalanine 59, arginine 87, threonine 93, arginine 104, and asparagine 114. Histidine 117 acts as the Pros-phosphohistidine intermediate in catalysis.

It belongs to the NDK family. In terms of assembly, homotetramer. The cofactor is Mg(2+).

It localises to the cytoplasm. It carries out the reaction a 2'-deoxyribonucleoside 5'-diphosphate + ATP = a 2'-deoxyribonucleoside 5'-triphosphate + ADP. The catalysed reaction is a ribonucleoside 5'-diphosphate + ATP = a ribonucleoside 5'-triphosphate + ADP. Its function is as follows. Major role in the synthesis of nucleoside triphosphates other than ATP. The ATP gamma phosphate is transferred to the NDP beta phosphate via a ping-pong mechanism, using a phosphorylated active-site intermediate. In Pseudomonas aeruginosa (strain UCBPP-PA14), this protein is Nucleoside diphosphate kinase.